The sequence spans 335 residues: Adenosine deaminase (335 aa).

Zn(2+) contacts are provided by H12 and H14. Positions 14 and 16 each coordinate substrate. Position 197 (H197) interacts with Zn(2+). The Proton donor role is filled by E200. Residue D278 coordinates Zn(2+).

This sequence belongs to the metallo-dependent hydrolases superfamily. Adenosine and AMP deaminases family. Adenosine deaminase subfamily. It depends on Zn(2+) as a cofactor.

It carries out the reaction adenosine + H2O + H(+) = inosine + NH4(+). The catalysed reaction is 2'-deoxyadenosine + H2O + H(+) = 2'-deoxyinosine + NH4(+). In terms of biological role, catalyzes the hydrolytic deamination of adenosine and 2-deoxyadenosine. This chain is Adenosine deaminase, found in Clostridium botulinum (strain ATCC 19397 / Type A).